A 120-amino-acid polypeptide reads, in one-letter code: NAD(P)H-quinone oxidoreductase subunit 3, chloroplastic (120 aa).

The next 3 helical transmembrane spans lie at 9 to 29 (YFWL…PISS), 64 to 84 (MFAS…PWAM), and 89 to 109 (LGVP…VGSV).

It belongs to the complex I subunit 3 family. As to quaternary structure, NDH is composed of at least 16 different subunits, 5 of which are encoded in the nucleus.

The protein localises to the plastid. Its subcellular location is the chloroplast thylakoid membrane. The enzyme catalyses a plastoquinone + NADH + (n+1) H(+)(in) = a plastoquinol + NAD(+) + n H(+)(out). The catalysed reaction is a plastoquinone + NADPH + (n+1) H(+)(in) = a plastoquinol + NADP(+) + n H(+)(out). Its function is as follows. NDH shuttles electrons from NAD(P)H:plastoquinone, via FMN and iron-sulfur (Fe-S) centers, to quinones in the photosynthetic chain and possibly in a chloroplast respiratory chain. The immediate electron acceptor for the enzyme in this species is believed to be plastoquinone. Couples the redox reaction to proton translocation, and thus conserves the redox energy in a proton gradient. This Huperzia lucidula (Shining clubmoss) protein is NAD(P)H-quinone oxidoreductase subunit 3, chloroplastic.